Here is a 393-residue protein sequence, read N- to C-terminus: MTVSGDAIPPHGGTLVNRIASPEQAQELRSKAEHCPILHLDERAQSDLEMIAIGGFSPLTGFMGREDYQSVLETMHLANGLAWSLPVTLPVSAEIAADLKEGQTIALANAEGRLLGLLELTEKFTYDKTREAQQVYRTTDEQHPGVKVLYQQGSVYLAGPVTLLQRDPHPLFPAYQIDPAQSRQLFRERGWKTIVGFQTRNPIHRAHEYIQKCALEIVDGLFLHPLVGATKSDDIPAEVRMRCYEVLIEKYYPKERVILAINPAAMRYAGPREAIFHALVRKNYGCTHFIVGRDHAGVGNYYGPYDAQHIFDEFRPEELGIIPLKFEHAFYCTVTGTMATAKTSPSQPHQRIHLSGTKVREMLRRGEIPPPEFSRPEVAQLLAEAMRERGQPE.

It belongs to the sulfate adenylyltransferase family.

It carries out the reaction sulfate + ATP + H(+) = adenosine 5'-phosphosulfate + diphosphate. The protein operates within sulfur metabolism; hydrogen sulfide biosynthesis; sulfite from sulfate: step 1/3. This is Sulfate adenylyltransferase from Synechococcus sp. (strain JA-3-3Ab) (Cyanobacteria bacterium Yellowstone A-Prime).